A 475-amino-acid chain; its full sequence is Ribulose bisphosphate carboxylase large chain (475 aa).

The propeptide occupies 1–2 (MS). Position 3 is an N-acetylproline (proline 3). Position 14 is an N6,N6,N6-trimethyllysine (lysine 14). Asparagine 123 and threonine 173 together coordinate substrate. The active-site Proton acceptor is the lysine 175. Lysine 177 is a binding site for substrate. Residues lysine 201, aspartate 203, and glutamate 204 each coordinate Mg(2+). The residue at position 201 (lysine 201) is an N6-carboxylysine. The active-site Proton acceptor is histidine 294. Substrate-binding residues include arginine 295, histidine 327, and serine 379.

It belongs to the RuBisCO large chain family. Type I subfamily. In terms of assembly, heterohexadecamer of 8 large chains and 8 small chains; disulfide-linked. The disulfide link is formed within the large subunit homodimers. Requires Mg(2+) as cofactor. Post-translationally, the disulfide bond which can form in the large chain dimeric partners within the hexadecamer appears to be associated with oxidative stress and protein turnover.

The protein localises to the plastid. The protein resides in the chloroplast. It carries out the reaction 2 (2R)-3-phosphoglycerate + 2 H(+) = D-ribulose 1,5-bisphosphate + CO2 + H2O. The enzyme catalyses D-ribulose 1,5-bisphosphate + O2 = 2-phosphoglycolate + (2R)-3-phosphoglycerate + 2 H(+). Its function is as follows. RuBisCO catalyzes two reactions: the carboxylation of D-ribulose 1,5-bisphosphate, the primary event in carbon dioxide fixation, as well as the oxidative fragmentation of the pentose substrate in the photorespiration process. Both reactions occur simultaneously and in competition at the same active site. This chain is Ribulose bisphosphate carboxylase large chain, found in Magnolia acuminata (Cucumber tree).